Here is a 457-residue protein sequence, read N- to C-terminus: tRNA-2-methylthio-N(6)-dimethylallyladenosine synthase (457 aa).

One can recognise an MTTase N-terminal domain in the interval 3–120; it reads KKVYVKTFGC…LPQMIDQRRA (118 aa). [4Fe-4S] cluster is bound by residues Cys12, Cys49, Cys83, Cys157, Cys161, and Cys164. The region spanning 143-377 is the Radical SAM core domain; it reads RVEGPSAFVS…QATIEENVAR (235 aa). Residues 380–447 form the TRAM domain; that stretch reads RSMVGKVERI…PHSLRGELLL (68 aa).

This sequence belongs to the methylthiotransferase family. MiaB subfamily. In terms of assembly, monomer. It depends on [4Fe-4S] cluster as a cofactor.

The protein localises to the cytoplasm. It catalyses the reaction N(6)-dimethylallyladenosine(37) in tRNA + (sulfur carrier)-SH + AH2 + 2 S-adenosyl-L-methionine = 2-methylsulfanyl-N(6)-dimethylallyladenosine(37) in tRNA + (sulfur carrier)-H + 5'-deoxyadenosine + L-methionine + A + S-adenosyl-L-homocysteine + 2 H(+). Functionally, catalyzes the methylthiolation of N6-(dimethylallyl)adenosine (i(6)A), leading to the formation of 2-methylthio-N6-(dimethylallyl)adenosine (ms(2)i(6)A) at position 37 in tRNAs that read codons beginning with uridine. This Burkholderia ambifaria (strain ATCC BAA-244 / DSM 16087 / CCUG 44356 / LMG 19182 / AMMD) (Burkholderia cepacia (strain AMMD)) protein is tRNA-2-methylthio-N(6)-dimethylallyladenosine synthase.